A 1036-amino-acid chain; its full sequence is Lethal(2) giant larvae protein homolog 1 (1036 aa).

10 WD repeats span residues 38–71 (SALA…FTGL), 78–119 (VTQM…GLSF), 139–175 (VTVV…GQTL), 199–233 (SLQG…DNVF), 239–271 (LESL…GSPP), 289–331 (AINK…ETLV), 339–373 (VIDF…VLDL), 395–473 (TCSA…YKLS), 517–592 (QKVA…RMLI), and 601–662 (TAVT…LRQS). Serine 662 is subject to Phosphoserine. A compositionally biased stretch (basic residues) spans 667-677 (RKSRVSGKKRT). The tract at residues 667–688 (RKSRVSGKKRTPAASSKLQEAN) is disordered. Positions 679-688 (AASSKLQEAN) are enriched in polar residues. WD repeat units follow at residues 722–782 (VRCL…KEVQ), 791–843 (AIAV…VSAK), 848–901 (LTAH…VHYS), and 915–938 (VFTR…SLSA). Residue threonine 957 is modified to Phosphothreonine. 3 positions are modified to phosphoserine: serine 964, serine 982, and serine 989. The interval 980–1002 (PESCEGSPSSAHSKRADTMEPPE) is disordered.

This sequence belongs to the WD repeat L(2)GL family. Associated with nonmuscle myosin II heavy chain. Interacts with PRKCI/aPKC, PARD6B/Par-6 and PARD6A. Interacts with STX4A. Interacts with RAB10 (GDP-bound form); the interaction is direct and promotes RAB10 association with membranes and activation through competition with the Rab inhibitor GDI1. Interacts with DCAF1. In terms of processing, phosphorylated by PRKCI on at least one of the following Ser residues: Ser 654, Ser-658, Ser-662, Ser-669 and Ser-672. Phosphorylation is important for appropriated cell polarization.

Its subcellular location is the early endosome membrane. It is found in the golgi apparatus. The protein localises to the trans-Golgi network membrane. The protein resides in the golgi apparatus membrane. It localises to the cell projection. Its subcellular location is the axon. It is found in the cytoplasm. The protein localises to the cytoskeleton. In terms of biological role, cortical cytoskeleton protein found in a complex involved in maintaining cell polarity and epithelial integrity. Involved in the regulation of mitotic spindle orientation, proliferation, differentiation and tissue organization of neuroepithelial cells. Involved in axonogenesis through RAB10 activation thereby regulating vesicular membrane trafficking toward the axonal plasma membrane. The protein is Lethal(2) giant larvae protein homolog 1 (Llgl1) of Mus musculus (Mouse).